A 215-amino-acid polypeptide reads, in one-letter code: 25 kDa ookinete surface antigen (215 aa).

The first 16 residues, 1-16, serve as a signal peptide directing secretion; that stretch reads MNMSYLFFFFFIQLVL. One can recognise an EGF-like 1; truncated domain in the interval 29–58; sequence CKDGFLIQMSNHFECNCNPGFVLTSESTCE. 3 EGF-like domains span residues 59 to 104, 104 to 148, and 151 to 191; these read NKVE…SICV, VPNE…NTCT, and GQTE…NACI. 9 cysteine pairs are disulfide-bonded: Cys63–Cys78, Cys72–Cys90, Cys92–Cys103, Cys108–Cys118, Cys113–Cys131, Cys133–Cys147, Cys155–Cys166, Cys159–Cys175, and Cys177–Cys190. Residues Asn144 and Asn163 are each glycosylated (N-linked (GlcNAc...) asparagine). Ser192 carries GPI-anchor amidated serine lipidation. Positions 193–215 are cleaved as a propeptide — removed in mature form; that stretch reads FSLFNILNLSIIFIISLIYFYII. The N-linked (GlcNAc...) asparagine glycan is linked to Asn200.

It is found in the cell membrane. This Plasmodium gallinaceum protein is 25 kDa ookinete surface antigen.